The chain runs to 280 residues: Pantothenate synthetase (280 aa).

31 to 38 (MGNLHVGH) lines the ATP pocket. Histidine 38 serves as the catalytic Proton donor. Glutamine 62 serves as a coordination point for (R)-pantoate. Glutamine 62 serves as a coordination point for beta-alanine. 150–153 (GKKD) serves as a coordination point for ATP. Residue glutamine 156 participates in (R)-pantoate binding. ATP-binding positions include valine 179 and 187 to 190 (MSSR).

Belongs to the pantothenate synthetase family. As to quaternary structure, homodimer.

The protein localises to the cytoplasm. It catalyses the reaction (R)-pantoate + beta-alanine + ATP = (R)-pantothenate + AMP + diphosphate + H(+). It participates in cofactor biosynthesis; (R)-pantothenate biosynthesis; (R)-pantothenate from (R)-pantoate and beta-alanine: step 1/1. Functionally, catalyzes the condensation of pantoate with beta-alanine in an ATP-dependent reaction via a pantoyl-adenylate intermediate. In Xanthomonas oryzae pv. oryzae (strain KACC10331 / KXO85), this protein is Pantothenate synthetase.